Reading from the N-terminus, the 566-residue chain is Transcription factor P14E8.02 (566 aa).

The interval 1–32 (MNISSQNVLLPSPIPSSSPMASHKKSWLSKHP) is disordered. Residue Ser73 is modified to Phosphoserine. In terms of domain architecture, FHA spans 86 to 137 (NKIGRSSQQCDHVLSTVDKAISRVHAIVTCTQDRMIIECVGWNGMIVSDKMR). Disordered stretches follow at residues 191-217 (EENR…SQDY), 269-291 (DCSK…LLNG), 312-334 (ESDD…IEES), and 364-437 (FTNH…TKEN). Residues 314 to 330 (DDLDKNEEISEGEEYTP) are compositionally biased toward acidic residues. Composition is skewed to polar residues over residues 373 to 383 (NSNITTSNDSP) and 414 to 428 (DENT…PSSH). Ser379 and Ser382 each carry phosphoserine.

Belongs to the PLM2/TOS4 family.

It is found in the nucleus. Functionally, probable transcriptional regulatory protein Required for G1/S progression. This Schizosaccharomyces pombe (strain 972 / ATCC 24843) (Fission yeast) protein is Transcription factor P14E8.02.